The following is a 179-amino-acid chain: Large ribosomal subunit protein uL5 (179 aa).

Belongs to the universal ribosomal protein uL5 family. In terms of assembly, part of the 50S ribosomal subunit; part of the 5S rRNA/L5/L18/L25 subcomplex. Contacts the 5S rRNA and the P site tRNA. Forms a bridge to the 30S subunit in the 70S ribosome.

Functionally, this is one of the proteins that bind and probably mediate the attachment of the 5S RNA into the large ribosomal subunit, where it forms part of the central protuberance. In the 70S ribosome it contacts protein S13 of the 30S subunit (bridge B1b), connecting the 2 subunits; this bridge is implicated in subunit movement. Contacts the P site tRNA; the 5S rRNA and some of its associated proteins might help stabilize positioning of ribosome-bound tRNAs. This is Large ribosomal subunit protein uL5 from Desulfovibrio desulfuricans (strain ATCC 27774 / DSM 6949 / MB).